The following is a 517-amino-acid chain: MFS efflux transporter inpD (517 aa).

Residues 1 to 24 (MEKTQTPSLTPDELSARSSTPFEE) form a disordered region. 5 consecutive transmembrane segments (helical) span residues 37-57 (LKFS…ALSL), 59-79 (DIGW…LVFG), 89-109 (IVYL…ATAP), 112-132 (IALI…LSGA), and 151-171 (ILGA…GGII). An N-linked (GlcNAc...) asparagine glycan is attached at N172. 9 helical membrane-spanning segments follow: residues 178–198 (WIFY…VFLL), 219–239 (LPAF…LLWG), 247–267 (NARI…FMLV), 292–312 (FFSF…PIWL), 328–348 (LPII…TPVI), 352–372 (VPFM…LSTL), 381–401 (VLGF…QTLV), 412–432 (IPIG…IALS), and 485–505 (AIVK…IGVL).

Belongs to the major facilitator superfamily.

The protein localises to the cell membrane. In terms of biological role, MFS efflux transporter; part of the inp gene cluster that mediates the biosynthesis of fellutamide B, a mycotoxin that acts as a proteasome inhibitor. In the first step of fellutabmide B biosynthesis inpC activates 3-hydroxydodecanoic acid to generate 3-hydroxydodecanoyl-AMP that is then loaded onto the T0 domain of inpB. The 3-hydroxydodecanoyl-S-phosphopantetheinyl-T0 is sequentially extended with L-Asn and L-Gln by the two CAT modules of inpB. The linear lipodipeptide from inpB is then transferred onto inpA for the addition of the third amino acid, L-Leu. Reductive releasing of the lipotripeptide by the TE domain of inpA produces (2S)-fellutamide B. InpF might be involved in the release and transfer of the lipodipeptide from inpB to inpA. The inp cluster-encoded proteasome subunit inpE confers resistance to internally produced fellutamides. The MFS efflux transporter inpD may contribute to fellutamide resistance as well. The sequence is that of MFS efflux transporter inpD from Emericella nidulans (strain FGSC A4 / ATCC 38163 / CBS 112.46 / NRRL 194 / M139) (Aspergillus nidulans).